A 229-amino-acid polypeptide reads, in one-letter code: MTPEEYLEGQVLLIDKPLKWSSFQAVNKLKYLLINKVGLPKKFKIGHAGTLDPLATGLLLICTGKFTKKISELQGQAKEYTGTFYIGATTPSYDLETEIDQTFPTEHINEVLIHETVKQFLGEIDQKPPIFSAIKKDGVRLYEHARAGESIEIESRKTTIHEFEITRIALPEIDFRVVCSKGTYIRSLAYDFGKAMNSGSHLTVLRRTKIGDYDVKNAIDITLFEESLQ.

The Nucleophile role is filled by D52.

It belongs to the pseudouridine synthase TruB family. Type 1 subfamily.

It catalyses the reaction uridine(55) in tRNA = pseudouridine(55) in tRNA. In terms of biological role, responsible for synthesis of pseudouridine from uracil-55 in the psi GC loop of transfer RNAs. The protein is tRNA pseudouridine synthase B of Flavobacterium johnsoniae (strain ATCC 17061 / DSM 2064 / JCM 8514 / BCRC 14874 / CCUG 350202 / NBRC 14942 / NCIMB 11054 / UW101) (Cytophaga johnsonae).